A 380-amino-acid chain; its full sequence is Carbamoyl phosphate synthase small chain (380 aa).

Residues 1–187 form a CPSase region; that stretch reads MTTSTRGAAK…VVPAIGAKRF (187 aa). Residues S55, G236, and G238 each coordinate L-glutamine. A Glutamine amidotransferase type-1 domain is found at 188-380; that stretch reads TVAAVDLGIK…FVSLMEGQRA (193 aa). The Nucleophile role is filled by C264. L-glutamine is bound by residues F265, Q268, N306, G308, and F309. Catalysis depends on residues H354 and E356.

This sequence belongs to the CarA family. In terms of assembly, composed of two chains; the small (or glutamine) chain promotes the hydrolysis of glutamine to ammonia, which is used by the large (or ammonia) chain to synthesize carbamoyl phosphate. Tetramer of heterodimers (alpha,beta)4.

It carries out the reaction hydrogencarbonate + L-glutamine + 2 ATP + H2O = carbamoyl phosphate + L-glutamate + 2 ADP + phosphate + 2 H(+). It catalyses the reaction L-glutamine + H2O = L-glutamate + NH4(+). It functions in the pathway amino-acid biosynthesis; L-arginine biosynthesis; carbamoyl phosphate from bicarbonate: step 1/1. It participates in pyrimidine metabolism; UMP biosynthesis via de novo pathway; (S)-dihydroorotate from bicarbonate: step 1/3. In terms of biological role, small subunit of the glutamine-dependent carbamoyl phosphate synthetase (CPSase). CPSase catalyzes the formation of carbamoyl phosphate from the ammonia moiety of glutamine, carbonate, and phosphate donated by ATP, constituting the first step of 2 biosynthetic pathways, one leading to arginine and/or urea and the other to pyrimidine nucleotides. The small subunit (glutamine amidotransferase) binds and cleaves glutamine to supply the large subunit with the substrate ammonia. In Streptomyces avermitilis (strain ATCC 31267 / DSM 46492 / JCM 5070 / NBRC 14893 / NCIMB 12804 / NRRL 8165 / MA-4680), this protein is Carbamoyl phosphate synthase small chain.